The primary structure comprises 1009 residues: MKKKNWIYALIVTLIIIIAIVSMIFFVQTKYGDQSEKGSQSVSNKNNKIHIAIVNEDQPTTYNGKKVELGQAFIKRLANEKNYKFETVTRNVAESGLKNGGYQVMIVIPENFSKLAMQLDAKTPSKISLQYKTAVGQKEEVAKNTEKVVSNVLNDFNKNLVEIYLTSIIDNLHNAQKNVGAIMTREHGVNSKFSNYLLNPINDFPELFTDTLVNSISANKDITKWFQTYNKSLLSANSDTFRVNTDYNVSTLIEKQNSLFDEHNTAMDKMLQDYKSQKDSVELDNYINALKQMDSQIDQQSSMQDTGKEEYKQTVKENLDKLREIIQSQESPFSKGMIEDYRKQLTESLQDELANNKDLQDALNSIKMNNAQFAENLEKQLHDDIVKEPDTDTTFIYNMSKQDFIAAGLNEGEANKYEAIVKEAKRYKNEYNLKKPLAEHINLTDYDNQVAQDTSSLINDGVKVQRTETIKSNDINQLTVATDPHFNFEGDIKINGKKYDIKDQSVQLDTSNKEYKVEVNGVAKLKKDAEKDFLKDKTMHLQLLFGQANRQDEPNDKKATSVVDVTLNHNLDGRLSKDALSQQLSALSRFDAHYKMYTDTKGREDKPFDNKRLIDMMVDQVINDMESFKDDKVAVLHQIDSMEENSDKLIDDILNNKKNTTKNKEDISKLIDQLENVKKTFAEEPQEPKIDKGKNDEFNTMSSNLDKEISRISEKSTQLLSDTQESKSIADSVSGQLNQVDNNVNKLHATGRALGVRANDLNRQMAKNDKDNELFAKEFKKVLQNSKDGDRQNQALKAFMSNPVQKKNLENVLANNGNTDVISPTLFVLLMYLLSMITAYIFYSYERAKGQMNFIKDDYSSKNHLWNNVITSGVIGTTGLVEGLIVGLIAMNKFHVLAGYRAKFILMVILTMMVFVLINTYLLRQVKSIGMFLMIAALGLYFVAMNNLKAAGQGVTNKISPLSYIDNMFFNYLNAEHPIGLVLVILTVLVIIGFVLNMFIKHFKKERLI.

A helical membrane pass occupies residues 7–27 (IYALIVTLIIIIAIVSMIFFV). The segment covering 680 to 697 (TFAEEPQEPKIDKGKNDE) has biased composition (basic and acidic residues). Positions 680–707 (TFAEEPQEPKIDKGKNDEFNTMSSNLDK) are disordered. A run of 5 helical transmembrane segments spans residues 822 to 842 (ISPT…AYIF), 869 to 889 (VITS…VGLI), 903 to 923 (KFIL…TYLL), 928 to 948 (SIGM…MNNL), and 979 to 999 (IGLV…LNMF).

Belongs to the EsaA family. As to quaternary structure, homodimer. Interacts with EssB.

Its subcellular location is the cell membrane. Functionally, component of the type VII secretion system (Ess). Provides together with EssB and other components such as EssC and EssE a secretion platform across the cytoplasmic membrane in the host. This Staphylococcus aureus (strain COL) protein is Type VII secretion system accessory factor EsaA.